A 248-amino-acid polypeptide reads, in one-letter code: Aquaporin Z (248 aa).

2 helical membrane passes run 11-31 (FIGTFWLVLGGCGAAVLAAAF) and 36-56 (IGFAGVSLAFGLTLLTMAFAI). Positions 65–67 (NPA) match the NPA 1 motif. Transmembrane regions (helical) follow at residues 87–107 (IAAQVLGGIAGAGVLYLIAGG), 132–152 (LLACLVCEVVMTFMFLMIILG), and 161–181 (GFAPIAIGLSLTLIHLISIPV). The NPA 2 motif lies at 187–189 (NPA). A helical transmembrane segment spans residues 203-223 (IAELWLFWLAPIVGAALAGLF).

The protein belongs to the MIP/aquaporin (TC 1.A.8) family. Homotetramer.

The protein resides in the cell inner membrane. The enzyme catalyses H2O(in) = H2O(out). Its function is as follows. Channel that permits osmotically driven movement of water in both directions. It is involved in the osmoregulation and in the maintenance of cell turgor during volume expansion in rapidly growing cells. It mediates rapid entry or exit of water in response to abrupt changes in osmolarity. The protein is Aquaporin Z of Gloeobacter violaceus (strain ATCC 29082 / PCC 7421).